A 290-amino-acid chain; its full sequence is Thymidylate synthase (290 aa).

Residues Arg-27 and Arg-152–Arg-153 contribute to the dUMP site. Cys-172 functions as the Nucleophile in the catalytic mechanism. Residues Arg-192–Asp-195, Asn-203, and His-233–Tyr-235 contribute to the dUMP site. Residue Asp-195 participates in (6R)-5,10-methylene-5,6,7,8-tetrahydrofolate binding. Residue Ala-289 participates in (6R)-5,10-methylene-5,6,7,8-tetrahydrofolate binding.

It belongs to the thymidylate synthase family. As to quaternary structure, homodimer.

It carries out the reaction dUMP + (6R)-5,10-methylene-5,6,7,8-tetrahydrofolate = 7,8-dihydrofolate + dTMP. Its pathway is pyrimidine metabolism; dTTP biosynthesis. The polypeptide is Thymidylate synthase (TS) (Ateles).